We begin with the raw amino-acid sequence, 301 residues long: uncharacterized protein (301 aa).

Catalysis depends on charge relay system residues S44 and Y107. Y133 functions as the Proton donor in the catalytic mechanism. K162 serves as the catalytic Schiff-base intermediate with substrate.

Belongs to the DapA family. In terms of assembly, homotetramer.

Its subcellular location is the cytoplasm. This is an uncharacterized protein from Pyrobaculum islandicum (strain DSM 4184 / JCM 9189 / GEO3).